The following is a 104-amino-acid chain: Vacuolar ATPase assembly integral membrane protein VMA21 (104 aa).

Over 1 to 21 the chain is Cytoplasmic; that stretch reads MSNRVSTGKMAMAPQESVQPA. Residues 22–42 traverse the membrane as a helical segment; it reads VLYKLVLFALLMAVVPIGTYF. Topologically, residues 43–65 are lumenal; the sequence is STLNYLWDGASRCGFPSGLCSTT. Residues 66 to 86 form a helical membrane-spanning segment; that stretch reads FAAISAIAAANLILVGYVVVA. Topologically, residues 87–104 are cytoplasmic; that stretch reads FREDAASRTGPLPEKKTS. Residues 101-104 carry the Prevents secretion from ER motif; that stretch reads KKTS.

It belongs to the VMA21 family.

The protein resides in the endoplasmic reticulum membrane. The protein localises to the endoplasmic reticulum-Golgi intermediate compartment membrane. It is found in the cytoplasmic vesicle. Its subcellular location is the COPII-coated vesicle membrane. In terms of biological role, required for the assembly of the V0 complex of the vacuolar ATPase (V-ATPase) in the endoplasmic reticulum. In Cryptococcus neoformans var. neoformans serotype D (strain B-3501A) (Filobasidiella neoformans), this protein is Vacuolar ATPase assembly integral membrane protein VMA21.